A 1045-amino-acid chain; its full sequence is Isoleucine--tRNA ligase (1045 aa).

The 'HIGH' region signature appears at 49-59 (PYCSGRIHLGT). The short motif at 591-595 (KMSKS) is the 'KMSKS' region element. Position 594 (Lys-594) interacts with ATP.

This sequence belongs to the class-I aminoacyl-tRNA synthetase family. IleS type 2 subfamily. Monomer. It depends on Zn(2+) as a cofactor.

Its subcellular location is the cytoplasm. The enzyme catalyses tRNA(Ile) + L-isoleucine + ATP = L-isoleucyl-tRNA(Ile) + AMP + diphosphate. Functionally, catalyzes the attachment of isoleucine to tRNA(Ile). As IleRS can inadvertently accommodate and process structurally similar amino acids such as valine, to avoid such errors it has two additional distinct tRNA(Ile)-dependent editing activities. One activity is designated as 'pretransfer' editing and involves the hydrolysis of activated Val-AMP. The other activity is designated 'posttransfer' editing and involves deacylation of mischarged Val-tRNA(Ile). This Methanothermobacter marburgensis (strain ATCC BAA-927 / DSM 2133 / JCM 14651 / NBRC 100331 / OCM 82 / Marburg) (Methanobacterium thermoautotrophicum) protein is Isoleucine--tRNA ligase.